We begin with the raw amino-acid sequence, 490 residues long: Betaine aldehyde dehydrogenase (490 aa).

Residues isoleucine 27 and aspartate 93 each coordinate K(+). 150–152 is an NAD(+) binding site; it reads GAW. Lysine 162 (charge relay system) is an active-site residue. 176–179 contacts NAD(+); sequence KPSE. Valine 180 contributes to the K(+) binding site. NAD(+) is bound at residue 230–233; it reads GTDT. K(+) is bound at residue leucine 246. Catalysis depends on glutamate 252, which acts as the Proton acceptor. Residues glycine 254, cysteine 286, and glutamate 387 each contribute to the NAD(+) site. The active-site Nucleophile is the cysteine 286. Cysteine 286 carries the cysteine sulfenic acid (-SOH) modification. Lysine 457 and glycine 460 together coordinate K(+). Residue glutamate 464 is the Charge relay system of the active site.

The protein belongs to the aldehyde dehydrogenase family. Dimer of dimers. Requires K(+) as cofactor.

It carries out the reaction betaine aldehyde + NAD(+) + H2O = glycine betaine + NADH + 2 H(+). Its pathway is amine and polyamine biosynthesis; betaine biosynthesis via choline pathway; betaine from betaine aldehyde: step 1/1. Functionally, involved in the biosynthesis of the osmoprotectant glycine betaine. Catalyzes the irreversible oxidation of betaine aldehyde to the corresponding acid. The sequence is that of Betaine aldehyde dehydrogenase from Pseudomonas syringae pv. syringae (strain B728a).